The chain runs to 179 residues: Diphosphoinositol polyphosphate phosphohydrolase 2 (179 aa).

Substrate contacts are provided by residues arginine 9, 17–19 (KKR), and 38–40 (SSR). The region spanning 17 to 143 (KKRAACLCFR…VHAEYLERLK (127 aa)) is the Nudix hydrolase domain. Residues glycine 49 and glutamate 65 each coordinate Mg(2+). The Nudix box signature appears at 50-71 (GGVEPEEEPGGAAAREVYEEAG). Glutamate 68 (proton acceptor) is an active-site residue. Glutamate 69 contacts Mg(2+). Substrate is bound by residues 88–90 (RKH), arginine 114, and lysine 132.

This sequence belongs to the Nudix hydrolase family. DIPP subfamily. It depends on Mg(2+) as a cofactor. Mn(2+) is required as a cofactor.

Its subcellular location is the cytoplasm. The catalysed reaction is diphospho-myo-inositol polyphosphate + H2O = myo-inositol polyphosphate + phosphate.. It carries out the reaction 5-diphospho-1D-myo-inositol 1,2,3,4,6-pentakisphosphate + H2O = 1D-myo-inositol hexakisphosphate + phosphate + H(+). It catalyses the reaction 3,5-bis(diphospho)-1D-myo-inositol 1,2,4,6-tetrakisphosphate + H2O = 3-diphospho-1D-myo-inositol 1,2,4,5,6-pentakisphosphate + phosphate + 2 H(+). The enzyme catalyses 5-diphospho-1D-myo-inositol 1,3,4,6-tetrakisphosphate + H2O = 1D-myo-inositol 1,3,4,5,6-pentakisphosphate + phosphate + H(+). The catalysed reaction is P(1),P(6)-bis(5'-adenosyl) hexaphosphate + H2O = 2 ATP + 2 H(+). It carries out the reaction P(1),P(5)-bis(5'-adenosyl) pentaphosphate + H2O = ADP + ATP + 2 H(+). It catalyses the reaction 5-phospho-alpha-D-ribose 1-diphosphate + H2O = alpha-D-ribose 1,5-bisphosphate + phosphate + H(+). Cleaves the beta-phosphate from diphosphoinositol polyphosphates such as PP-InsP5 (diphosphoinositol pentakisphosphate), PP-InsP4 (diphosphoinositol tetrakisphosphate) and [PP]2-InsP4 (bisdiphosphoinositol tetrakisphosphate), suggesting that it may play a role in signal transduction. Diadenosine polyphosphates, particularly Ap6A (P(1),P(6)-bis(5a-adenosyl) hexaphosphate) and Ap5A (P(1),P(5)-bis(5'-adenosyl) pentaphosphate) are downstream effectors of a signaling cascade that regulates cardiac KATP channels, can also be substrates, although with lower preference than the diphosphoinositol polyphosphates. Can also catalyze the hydrolysis of 5-phosphoribose 1-diphosphate, generating the glycolytic activator ribose 1,5-bisphosphate. Does not play a role in U8 snoRNA decapping activity. Binds U8 snoRNA. The protein is Diphosphoinositol polyphosphate phosphohydrolase 2 of Rattus norvegicus (Rat).